We begin with the raw amino-acid sequence, 66 residues long: Muscarinic toxin alpha (66 aa).

4 cysteine pairs are disulfide-bonded: cysteine 3/cysteine 24, cysteine 17/cysteine 42, cysteine 46/cysteine 58, and cysteine 59/cysteine 64.

The protein belongs to the three-finger toxin family. Short-chain subfamily. Aminergic toxin sub-subfamily. Expressed by the venom gland.

Its subcellular location is the secreted. Selectively binds with high-affinity to the a2B-adrenoceptor subtype (ADRA2B). The toxin reversibly binds to ADRA2B, and its mode of inhibition is non-competitive. The toxin has also been described to bind with high affinity to all muscarinic receptor subtypes (Ki=23 nM (on CHRM1), Ki=44 nM (on CHRM2), Ki=3 nM (on CHRM3), Ki=5 nM (on CHRM4), and Ki=8 nM (on CHRM5)) but no other data support these affinity values. The sequence is that of Muscarinic toxin alpha from Dendroaspis polylepis polylepis (Black mamba).